Here is a 262-residue protein sequence, read N- to C-terminus: MFFMVRRKNEWPEEGELVVGTVHKVLNYGAFATLEEYPGKEAFIHISEVSSGWVKNIRDFVRENQKIVARVLRVNPRKGHVDVSMKRIREDQRTKKIQAWKIEQKAEKFLELAARDLGKDLDTAYEEVGYELMDIFGDLYGAFETAAEEGEKSLIEEGVPEDWAAVITEVAKRNITPPEVQITGYVDIKSYAPNGVEIIRKALKSAQDEGITVQAVGAPRYRLIVKSTDYLKAEKQLKEAAQKCIEIVEKEGGEGEFLRELT.

The region spanning 15–86 (GELVVGTVHK…RKGHVDVSMK (72 aa)) is the S1 motif domain.

This sequence belongs to the eIF-2-alpha family. Heterotrimer composed of an alpha, a beta and a gamma chain.

EIF-2 functions in the early steps of protein synthesis by forming a ternary complex with GTP and initiator tRNA. This Methanothermobacter thermautotrophicus (strain ATCC 29096 / DSM 1053 / JCM 10044 / NBRC 100330 / Delta H) (Methanobacterium thermoautotrophicum) protein is Translation initiation factor 2 subunit alpha (eif2a).